Consider the following 89-residue polypeptide: Small ribosomal subunit protein uS15 (89 aa).

Belongs to the universal ribosomal protein uS15 family. As to quaternary structure, part of the 30S ribosomal subunit. Forms a bridge to the 50S subunit in the 70S ribosome, contacting the 23S rRNA.

Its function is as follows. One of the primary rRNA binding proteins, it binds directly to 16S rRNA where it helps nucleate assembly of the platform of the 30S subunit by binding and bridging several RNA helices of the 16S rRNA. Functionally, forms an intersubunit bridge (bridge B4) with the 23S rRNA of the 50S subunit in the ribosome. This chain is Small ribosomal subunit protein uS15, found in Polynucleobacter necessarius subsp. necessarius (strain STIR1).